Reading from the N-terminus, the 643-residue chain is Protein disulfide-isomerase A4 (643 aa).

A signal peptide spans 1 to 20 (MKLRKAWLLVLLLALTQLLA). Thioredoxin domains lie at 21–167 (AASA…EVSQ) and 167–299 (QPDW…EFLK). The interval 24-58 (AEDAHEDASDSENPIEDDDDEEEDEEDEDDLEVKE) is disordered. A compositionally biased stretch (acidic residues) spans 32-56 (SDSENPIEDDDDEEEDEEDEDDLEV). The CXXC motif lies at 89 to 92 (CGHC). Intrachain disulfides connect Cys89–Cys92 and Cys204–Cys207. The residue at position 364 (Lys364) is an N6-acetyllysine. One can recognise a Thioredoxin 3 domain in the interval 503 to 634 (FKKGKLKPVI…LSKFIDEHAT (132 aa)). A CXXC motif is present at residues 553–556 (CGHC). Residues Cys553 and Cys556 are joined by a disulfide bond. The short motif at 640–643 (KEEL) is the Prevents secretion from ER element.

This sequence belongs to the protein disulfide isomerase family. As to quaternary structure, part of a large chaperone multiprotein complex comprising DNAJB11, HSP90B1, HSPA5, HYOU, PDIA2, PDIA4, PDIA6, PPIB, SDF2L1, UGGT1 and very small amounts of ERP29, but not, or at very low levels, CALR nor CANX. Component of a complex containing at least CRELD2, MANF, MATN3 and PDIA4. In terms of processing, O-glycosylated.

It localises to the endoplasmic reticulum lumen. The protein localises to the melanosome. The catalysed reaction is Catalyzes the rearrangement of -S-S- bonds in proteins.. The protein is Protein disulfide-isomerase A4 (Pdia4) of Rattus norvegicus (Rat).